A 258-amino-acid polypeptide reads, in one-letter code: Acyl-[acyl-carrier-protein]--UDP-N-acetylglucosamine O-acyltransferase (258 aa).

The protein belongs to the transferase hexapeptide repeat family. LpxA subfamily. In terms of assembly, homotrimer.

Its subcellular location is the cytoplasm. The enzyme catalyses a (3R)-hydroxyacyl-[ACP] + UDP-N-acetyl-alpha-D-glucosamine = a UDP-3-O-[(3R)-3-hydroxyacyl]-N-acetyl-alpha-D-glucosamine + holo-[ACP]. The protein operates within glycolipid biosynthesis; lipid IV(A) biosynthesis; lipid IV(A) from (3R)-3-hydroxytetradecanoyl-[acyl-carrier-protein] and UDP-N-acetyl-alpha-D-glucosamine: step 1/6. Its function is as follows. Involved in the biosynthesis of lipid A, a phosphorylated glycolipid that anchors the lipopolysaccharide to the outer membrane of the cell. The protein is Acyl-[acyl-carrier-protein]--UDP-N-acetylglucosamine O-acyltransferase of Azotobacter vinelandii (strain DJ / ATCC BAA-1303).